A 213-amino-acid polypeptide reads, in one-letter code: Thiamine-phosphate synthase (213 aa).

4-amino-2-methyl-5-(diphosphooxymethyl)pyrimidine is bound by residues 41 to 45 (QFRVK) and asparagine 73. Mg(2+) is bound by residues aspartate 74 and aspartate 93. Position 112 (threonine 112) interacts with 4-amino-2-methyl-5-(diphosphooxymethyl)pyrimidine. A 2-[(2R,5Z)-2-carboxy-4-methylthiazol-5(2H)-ylidene]ethyl phosphate-binding site is contributed by 139–141 (SAT). Residue lysine 142 participates in 4-amino-2-methyl-5-(diphosphooxymethyl)pyrimidine binding. Glycine 171 lines the 2-[(2R,5Z)-2-carboxy-4-methylthiazol-5(2H)-ylidene]ethyl phosphate pocket.

Belongs to the thiamine-phosphate synthase family. The cofactor is Mg(2+).

The catalysed reaction is 2-[(2R,5Z)-2-carboxy-4-methylthiazol-5(2H)-ylidene]ethyl phosphate + 4-amino-2-methyl-5-(diphosphooxymethyl)pyrimidine + 2 H(+) = thiamine phosphate + CO2 + diphosphate. The enzyme catalyses 2-(2-carboxy-4-methylthiazol-5-yl)ethyl phosphate + 4-amino-2-methyl-5-(diphosphooxymethyl)pyrimidine + 2 H(+) = thiamine phosphate + CO2 + diphosphate. It carries out the reaction 4-methyl-5-(2-phosphooxyethyl)-thiazole + 4-amino-2-methyl-5-(diphosphooxymethyl)pyrimidine + H(+) = thiamine phosphate + diphosphate. It participates in cofactor biosynthesis; thiamine diphosphate biosynthesis; thiamine phosphate from 4-amino-2-methyl-5-diphosphomethylpyrimidine and 4-methyl-5-(2-phosphoethyl)-thiazole: step 1/1. In terms of biological role, condenses 4-methyl-5-(beta-hydroxyethyl)thiazole monophosphate (THZ-P) and 2-methyl-4-amino-5-hydroxymethyl pyrimidine pyrophosphate (HMP-PP) to form thiamine monophosphate (TMP). The polypeptide is Thiamine-phosphate synthase (Erythrobacter litoralis (strain HTCC2594)).